Consider the following 376-residue polypeptide: 2-aminoethylphosphonate--pyruvate transaminase 2 (376 aa).

The residue at position 194 (Lys-194) is an N6-(pyridoxal phosphate)lysine.

This sequence belongs to the class-V pyridoxal-phosphate-dependent aminotransferase family. PhnW subfamily. Homodimer. Pyridoxal 5'-phosphate is required as a cofactor.

It carries out the reaction (2-aminoethyl)phosphonate + pyruvate = phosphonoacetaldehyde + L-alanine. In terms of biological role, involved in phosphonate degradation. The sequence is that of 2-aminoethylphosphonate--pyruvate transaminase 2 from Burkholderia lata (strain ATCC 17760 / DSM 23089 / LMG 22485 / NCIMB 9086 / R18194 / 383).